The following is a 307-amino-acid chain: Aspartate carbamoyltransferase catalytic subunit (307 aa).

The carbamoyl phosphate site is built by Arg59 and Thr60. Lys87 is an L-aspartate binding site. Carbamoyl phosphate-binding residues include Arg109, His137, and Gln140. Arg170 and Arg224 together coordinate L-aspartate. Carbamoyl phosphate is bound by residues Gly265 and Pro266.

This sequence belongs to the aspartate/ornithine carbamoyltransferase superfamily. ATCase family. In terms of assembly, heterododecamer (2C3:3R2) of six catalytic PyrB chains organized as two trimers (C3), and six regulatory PyrI chains organized as three dimers (R2).

The catalysed reaction is carbamoyl phosphate + L-aspartate = N-carbamoyl-L-aspartate + phosphate + H(+). The protein operates within pyrimidine metabolism; UMP biosynthesis via de novo pathway; (S)-dihydroorotate from bicarbonate: step 2/3. Catalyzes the condensation of carbamoyl phosphate and aspartate to form carbamoyl aspartate and inorganic phosphate, the committed step in the de novo pyrimidine nucleotide biosynthesis pathway. In Cytophaga hutchinsonii (strain ATCC 33406 / DSM 1761 / CIP 103989 / NBRC 15051 / NCIMB 9469 / D465), this protein is Aspartate carbamoyltransferase catalytic subunit.